The sequence spans 1405 residues: DNA-directed RNA polymerase subunit beta' (1405 aa).

Residues cysteine 70, cysteine 72, cysteine 85, and cysteine 88 each coordinate Zn(2+). 3 residues coordinate Mg(2+): aspartate 460, aspartate 462, and aspartate 464. 4 residues coordinate Zn(2+): cysteine 814, cysteine 888, cysteine 895, and cysteine 898.

Belongs to the RNA polymerase beta' chain family. The RNAP catalytic core consists of 2 alpha, 1 beta, 1 beta' and 1 omega subunit. When a sigma factor is associated with the core the holoenzyme is formed, which can initiate transcription. Mg(2+) is required as a cofactor. The cofactor is Zn(2+).

The enzyme catalyses RNA(n) + a ribonucleoside 5'-triphosphate = RNA(n+1) + diphosphate. DNA-dependent RNA polymerase catalyzes the transcription of DNA into RNA using the four ribonucleoside triphosphates as substrates. The protein is DNA-directed RNA polymerase subunit beta' of Wigglesworthia glossinidia brevipalpis.